The following is a 547-amino-acid chain: MNAFTRAWYALERHYQDTRHVLLRDRFACEPDRFERMHERLDGMLFDYSKNRLGEDTLQLLCRLAETADLEGKMRALRTGAKVNNSEGRAALHTALRLPDGAGAVYADGRDVLPEIRRELNRALKFAHSLDDGSYQGTTGKRITDFVHIGIGGSDLGPAMCVQALEPFRRHIAVHFAANADPACLDEVLCRLNPETTVFCVASKSFKTPETLLNAEAVKAWYRGAGFSESETGCHFCAVSADTEAAQSFGIAAERVFAMYDWVGGRYSVWSPVGLPVMVAVGGARFRELLAGAHAMDSHFFHTPPRRNIPVLMALIAVWYNNFQHADGQTAVPYSHNLRLLPAWLNQLDMESLGKSRASDGSPAACKTGGIVFGGEGVNCQHAYFQLLHQGTRLIPCDFIVPMTAQGVEDGRSRFTVANAFAQAEALMKGKTLDEARAELADLPEAERERLAPHKEFPGNRPSNSILLERLTPYNLGMLMAAYEHKTFVQGVIWDINPFDQWGVEYGKQLAKTIIGELEGGTSVHDASTEGLMAFYRECRLKGGGAA.

Residue glutamate 351 is the Proton donor of the active site. Residues histidine 382 and lysine 508 contribute to the active site.

It belongs to the GPI family.

Its subcellular location is the cytoplasm. The enzyme catalyses alpha-D-glucose 6-phosphate = beta-D-fructose 6-phosphate. The protein operates within carbohydrate biosynthesis; gluconeogenesis. It functions in the pathway carbohydrate degradation; glycolysis; D-glyceraldehyde 3-phosphate and glycerone phosphate from D-glucose: step 2/4. Its function is as follows. Catalyzes the reversible isomerization of glucose-6-phosphate to fructose-6-phosphate. This is Glucose-6-phosphate isomerase 2 from Neisseria meningitidis serogroup A / serotype 4A (strain DSM 15465 / Z2491).